We begin with the raw amino-acid sequence, 281 residues long: 3'-5' exonuclease Snipper (281 aa).

The tract at residues D19 to R52 is disordered. Residues N27–T39 are compositionally biased toward acidic residues. Positions Y64–L262 constitute an Exonuclease domain. Mg(2+) is bound by residues D69 and E71. Catalysis depends on E71, which acts as the Proton acceptor. The AMP site is built by E71 and A72. Mg(2+) is bound at residue D183. The active-site Proton acceptor is H240. H240 is an AMP binding site. Mg(2+) is bound at residue D245.

Belongs to the ERI2 family. Requires Mg(2+) as cofactor.

The protein localises to the cytoplasm. Its subcellular location is the nucleus. It is found in the nucleolus. A broad-specificity exonuclease, capable of degrading both structure-specific DNA and RNA targets without sequence specificity in vitro. Requires two to five unpaired nucleotides in the 3' region for efficient binding and nuclease activity. Binds with higher affinity to RNA and DNA stem-loop substrates compared to single-stranded substrate. Binds to the 3'-end of histone mRNAs and degrades them, suggesting that it might play a role in histone mRNA decay after replication. Can readily cleave the histone stem-loop RNA beyond the -12 (UUU) position in the loop to produce -14 and then -16 oligonucleotide fragments for both the stem-loop and the reverse stem-loop. Cleaves both the single-stranded 3' flank as well as the double-stranded stem portion of histone stem-loop RNA. Might affect histone mRNA 3' processing thereby regulating histone protein expression. Has an important role in development and tissue formation. Might have a role in 5.8S rRNA precursor processing. The sequence is that of 3'-5' exonuclease Snipper from Drosophila melanogaster (Fruit fly).